Here is a 50-residue protein sequence, read N- to C-terminus: Protein PndA (50 aa).

The chain crosses the membrane as a helical span at residues 5-25; that stretch reads TFLMMLIVVCVTILCFVWMVR.

The protein belongs to the Hok/Gef family.

It localises to the cell inner membrane. In terms of biological role, when overexpressed kill the cells from the inside by interfering with a vital function in the cell membrane. Toxic component of a type I toxin-antitoxin (TA) system. When expressed is involved in cellular Mg(2+) release and degradation of stable RNA. The polypeptide is Protein PndA (pndA) (Escherichia coli).